Here is a 165-residue protein sequence, read N- to C-terminus: Large ribosomal subunit protein uL10 (165 aa).

The protein belongs to the universal ribosomal protein uL10 family. In terms of assembly, part of the ribosomal stalk of the 50S ribosomal subunit. The N-terminus interacts with L11 and the large rRNA to form the base of the stalk. The C-terminus forms an elongated spine to which L12 dimers bind in a sequential fashion forming a multimeric L10(L12)X complex.

Forms part of the ribosomal stalk, playing a central role in the interaction of the ribosome with GTP-bound translation factors. The polypeptide is Large ribosomal subunit protein uL10 (Yersinia pseudotuberculosis serotype IB (strain PB1/+)).